We begin with the raw amino-acid sequence, 815 residues long: Sodium/hydrogen exchanger 1 (815 aa).

Residues 1–98 (MVLRSGICGL…FPVLGIDYTH (98 aa)) lie on the Extracellular side of the membrane. O-linked (GalNAc...) threonine glycosylation is present at Thr42. Positions 42–79 (TASTIRSSEPPRERSIGDVTTAPPEVTPESRPVNHSVT) are disordered. Ser56 is a glycosylation site (O-linked (GalNAc...) serine). Thr61, Thr62, and Thr68 each carry an O-linked (GalNAc...) threonine glycan. Asn75 carries an N-linked (GlcNAc...) asparagine glycan. A helical membrane pass occupies residues 99–121 (VRTPFEISLWILLACLMKIGFHV). The Cytoplasmic segment spans residues 122 to 130 (IPTISSIVP). The chain crosses the membrane as a helical span at residues 131-148 (ESCLLIVVGLLVGGLIKG). At 149–158 (VGETPPFLQS) the chain is on the extracellular side. Residues 159–176 (DVFFLFLLPPIILDAGYF) traverse the membrane as a helical segment. The Cytoplasmic portion of the chain corresponds to 177-186 (LPLRQFTENL). Residues 187–215 (GTILIFAVVGTLWNAFFLGGLMYAVCLVG) form a helical membrane-spanning segment. Over 216-222 (GEQINNI) the chain is Extracellular. The helical transmembrane segment at 223 to 249 (GLLDNLLFGSIISAVDPVAVLAVFEEI) threads the bilayer. The Cytoplasmic segment spans residues 250–252 (HIN). The helical transmembrane segment at 253 to 283 (ELLHILVFGESLLNDAVTVVLYHLFEEFANY) threads the bilayer. The Extracellular portion of the chain corresponds to 284-287 (EHVG). A helical transmembrane segment spans residues 288–322 (IVDIFLGFLSFFVVALGGVLVGVVYGVIAAFTSRF). The Cytoplasmic portion of the chain corresponds to 323-328 (TSHIRV). The helical transmembrane segment at 329–341 (IEPLFVFLYSYMA) threads the bilayer. Residues 342-350 (YLSAELFHL) lie on the Extracellular side of the membrane. The helical transmembrane segment at 351–371 (SGIMALIASGVVMRPYVEANI) threads the bilayer. Over 372 to 373 (SH) the chain is Cytoplasmic. The helical transmembrane segment at 374–404 (KSHTTIKYFLKMWSSVSETLIFIFLGVSTVA) threads the bilayer. Topologically, residues 405 to 410 (GSHHWN) are extracellular. The chain crosses the membrane as a helical span at residues 411 to 438 (WTFVISTLLFCLIARVLGVLGLTWFINK). Topologically, residues 439 to 444 (FRIVKL) are cytoplasmic. A helical membrane pass occupies residues 445–469 (TPKDQFIIAYGGLRGAIAFSLGYLL). Residues 470–475 (DKKHFP) lie on the Extracellular side of the membrane. A helical transmembrane segment spans residues 476–505 (MCDLFLTAIITVIFFTVFVQGMTIRPLVDL). An interaction with TESC region spans residues 503–545 (VDLLAVKKKQETKRSINEEIHTQFLDHLLTGIEDICGHYGHHH). At 506–815 (LAVKKKQETK…EGEPFFPKGQ (310 aa)) the chain is on the cytoplasmic side. The PI(4,5)P2-binding region stretch occupies residues 509–516 (KKKQETKR). Residues 515–545 (KRSINEEIHTQFLDHLLTGIEDICGHYGHHH) are interaction with CHP2. The confers pH-dependent PI(4,5)P2 binding stretch occupies residues 540–545 (HYGHHH). The interval 552–560 (RFNKKYVKK) is PI(4,5)P2-binding region. Phosphoserine occurs at positions 599 and 602. Thr603 carries the phosphothreonine modification. 2 positions are modified to phosphoserine: Ser605 and Ser648. The interaction with TESC stretch occupies residues 633 to 815 (KILRNNLQKT…EGEPFFPKGQ (183 aa)). The interval 633–815 (KILRNNLQKT…EGEPFFPKGQ (183 aa)) is interaction with CALM1. Residues 684 to 687 (LTVP) are interaction with PPP3CA. Residues Ser693, Ser697, and Ser703 each carry the phosphoserine modification. An interaction with PPP3CA region spans residues 715–720 (PVITID). A phosphoserine mark is found at Ser723, Ser726, and Ser729. The interval 744–815 (LSRDPAKVAE…EGEPFFPKGQ (72 aa)) is disordered. Phosphothreonine is present on Thr779. Positions 782–791 (PSDSPSSQRI) are enriched in polar residues. A phosphoserine mark is found at Ser785, Ser787, and Ser796.

This sequence belongs to the monovalent cation:proton antiporter 1 (CPA1) transporter (TC 2.A.36) family. In terms of assembly, homodimer; dimerization is crucial for its function. Oligomer. Interacts with CALM1 in a calcium-dependent manner. Interacts with TESC. Interacts (via the C-terminal domain) with CHP1; the interaction occurs at the plasma membrane in a calcium-dependent manner and facilitates the maturation, cell surface expression, and function of SLC9A3. Interacts with CHP2; the interaction occurs in a calcium-dependent manner. Interacts with EZR; regulates the cytoskeletal interactions of SLC9A1 and promotes stress fiber formation. Post-translationally, O-glycosylated. In terms of processing, ubiquitinated, leading to its degradation by the proteasome. Ubiquitination is reduced by CHP1. Phosphorylation at Thr-779 increases SLC9A1 activity. Specifically dephosphorylated at Thr-779 by PPP3CA that negatively regulates SLC9A1 activity. Phosphorylation at Ser-648 by AKT1 reduces SLC9A1 binding to CALM1. Post-translationally, palmitoylated; may play a major role in SLC9A1 regulation. In terms of tissue distribution, kidney and intestine.

It localises to the cell membrane. Its subcellular location is the basolateral cell membrane. It carries out the reaction Na(+)(in) + H(+)(out) = Na(+)(out) + H(+)(in). The enzyme catalyses Li(+)(out) + H(+)(in) = Li(+)(in) + H(+)(out). The catalysed reaction is Li(+)(in) + Na(+)(out) = Li(+)(out) + Na(+)(in). Activated at acidic pHs. Inhibited by amiloride and 5-amino-substituted derivatives. Inhibited by cariporide and eniporide. Phosphatidylinositol 4,5-bisphosphate (PI(4,5)P2) and phosphatidylinositol 3,4,5-trisphosphate (PI(3,4,5)P3) bind and differentially regulate SLC9A1 activity. In terms of biological role, electroneutral Na(+) /H(+) antiporter that extrudes Na(+) in exchange for external protons driven by the inward sodium ion chemical gradient, protecting cells from acidification that occurs from metabolism. Exchanges intracellular H(+) ions for extracellular Na(+) in 1:1 stoichiometry. Plays a key role in maintening intracellular pH neutral and cell volume, and thus is important for cell growth, proliferation, migration and survival. In addition, can transport lithium Li(+) and also functions as a Na(+)/Li(+) antiporter. SLC9A1 also functions in membrane anchoring and organization of scaffolding complexes that coordinate signaling inputs. In Homo sapiens (Human), this protein is Sodium/hydrogen exchanger 1.